Consider the following 115-residue polypeptide: NADH-ubiquinone oxidoreductase chain 3 (115 aa).

The next 3 helical transmembrane spans lie at 3–23 (LMLT…IAFW), 55–75 (FFLV…LLPL), and 86–106 (TMLT…AYEW).

It belongs to the complex I subunit 3 family. Core subunit of respiratory chain NADH dehydrogenase (Complex I) which is composed of 45 different subunits. Interacts with TMEM186. Interacts with TMEM242.

It localises to the mitochondrion inner membrane. The enzyme catalyses a ubiquinone + NADH + 5 H(+)(in) = a ubiquinol + NAD(+) + 4 H(+)(out). Core subunit of the mitochondrial membrane respiratory chain NADH dehydrogenase (Complex I) which catalyzes electron transfer from NADH through the respiratory chain, using ubiquinone as an electron acceptor. Essential for the catalytic activity of complex I. The chain is NADH-ubiquinone oxidoreductase chain 3 from Ceratotherium simum (White rhinoceros).